A 624-amino-acid chain; its full sequence is tRNA uridine 5-carboxymethylaminomethyl modification enzyme MnmG (624 aa).

Residues 13-18, Val125, and Ser180 contribute to the FAD site; that span reads GAGHAG. 272-286 serves as a coordination point for NAD(+); the sequence is GPRYCPSIEDKVVKF. Gln369 contributes to the FAD binding site.

The protein belongs to the MnmG family. In terms of assembly, homodimer. Heterotetramer of two MnmE and two MnmG subunits. FAD serves as cofactor.

It localises to the cytoplasm. Functionally, NAD-binding protein involved in the addition of a carboxymethylaminomethyl (cmnm) group at the wobble position (U34) of certain tRNAs, forming tRNA-cmnm(5)s(2)U34. This chain is tRNA uridine 5-carboxymethylaminomethyl modification enzyme MnmG, found in Thermodesulfovibrio yellowstonii (strain ATCC 51303 / DSM 11347 / YP87).